A 263-amino-acid polypeptide reads, in one-letter code: uncharacterized protein (263 aa).

The protein resides in the mitochondrion. This is an uncharacterized protein from Schizosaccharomyces pombe (strain 972 / ATCC 24843) (Fission yeast).